A 197-amino-acid polypeptide reads, in one-letter code: Probable GTP-binding protein EngB (197 aa).

An EngB-type G domain is found at 26 to 197 (DLPEIALAGR…TSWDAILESL (172 aa)). Residues 34-41 (GRSNVGKS), 61-65 (GKTQS), 79-82 (DVPG), 146-149 (TKAD), and 178-180 (FSS) each bind GTP. The Mg(2+) site is built by Ser41 and Thr63.

It belongs to the TRAFAC class TrmE-Era-EngA-EngB-Septin-like GTPase superfamily. EngB GTPase family. It depends on Mg(2+) as a cofactor.

Its function is as follows. Necessary for normal cell division and for the maintenance of normal septation. This chain is Probable GTP-binding protein EngB, found in Streptococcus mutans serotype c (strain ATCC 700610 / UA159).